The primary structure comprises 247 residues: Terpene cyclase ausL (247 aa).

6 helical membrane passes run 49-69 (AIAV…AWIY), 75-95 (HWQG…AATL), 114-134 (LVLL…CLAL), 138-158 (GALG…SGAV), 171-191 (SLVI…KLCI), and 206-226 (PMCW…PVLY).

This sequence belongs to the paxB family.

Its subcellular location is the membrane. Its pathway is secondary metabolite biosynthesis; terpenoid biosynthesis. Its function is as follows. Terpene cyclase; part of the gene cluster that mediates the biosynthesis of calidodehydroaustin, a fungal meroterpenoid. The first step of the pathway is the synthesis of 3,5-dimethylorsellinic acid by the polyketide synthase ausA. 3,5-dimethylorsellinic acid is then prenylated by the polyprenyl transferase ausN. Further epoxidation by the FAD-dependent monooxygenase ausM and cyclization by the probable terpene cyclase ausL lead to the formation of protoaustinoid A. Protoaustinoid A is then oxidized to spiro-lactone preaustinoid A3 by the combined action of the FAD-binding monooxygenases ausB and ausC, and the dioxygenase ausE. Acid-catalyzed keto-rearrangement and ring contraction of the tetraketide portion of preaustinoid A3 by ausJ lead to the formation of preaustinoid A4. The aldo-keto reductase ausK, with the help of ausH, is involved in the next step by transforming preaustinoid A4 into isoaustinone which is in turn hydroxylated by the P450 monooxygenase ausI to form austinolide. The cytochrome P450 monooxygenase ausG modifies austinolide to austinol. Austinol is further acetylated to austin by the O-acetyltransferase ausP, which spontaneously changes to dehydroaustin. The cytochrome P450 monooxygenase ausR then converts dehydroaustin is into 7-dehydrodehydroaustin. The hydroxylation catalyzed by ausR permits the O-acetyltransferase ausQ to add an additional acetyl group to the molecule, leading to the formation of acetoxydehydroaustin. The short chain dehydrogenase ausT catalyzes the reduction of the double bond present between carbon atoms 1 and 2 to convert 7-dehydrodehydroaustin into 1,2-dihydro-7-hydroxydehydroaustin. AusQ catalyzes not only an acetylation reaction but also the addition of the PKS ausV diketide product to 1,2-dihydro-7-hydroxydehydroaustin, forming precalidodehydroaustin. Finally, the iron/alpha-ketoglutarate-dependent dioxygenase converts precalidodehydroaustin into calidodehydroaustin. In Aspergillus calidoustus, this protein is Terpene cyclase ausL.